We begin with the raw amino-acid sequence, 317 residues long: Melanocyte-stimulating hormone receptor (317 aa).

At 1–37 (MPVQGSQRRLLGSLNSTPTATPKLGLAANQTGAQCLE) the chain is on the extracellular side. N-linked (GlcNAc...) asparagine glycosylation occurs at Asn-29. The chain crosses the membrane as a helical span at residues 38–63 (VSIPDGLFLSLGLVSLVENVLVVAAI). Residues 64–72 (ARNRNLHSP) are Cytoplasmic-facing. The chain crosses the membrane as a helical span at residues 73–93 (MYCFICCLALSDLLVSGSNML). At 94–118 (ETAVILLLEAGALAARAAVVQQLDN) the chain is on the extracellular side. The chain crosses the membrane as a helical span at residues 119–140 (VIDVITCSSMLSSLCFLGAIAM). Residues 141-163 (DRYISIFYALRYHSIVTLPRARG) are Cytoplasmic-facing. The helical transmembrane segment at 164-183 (VVAAIWVASILFSTLFIAYY) threads the bilayer. Residues 184 to 191 (DHVAVLLC) are Extracellular-facing. The helical transmembrane segment at 192–211 (LVVFFLAMLVLMAVLYVHML) threads the bilayer. Residues 212-240 (ARACQHAQGIAQLHKRQRPAHQGVGLKGA) are Cytoplasmic-facing. The chain crosses the membrane as a helical span at residues 241–266 (ATLTILLGIFFLCWGPFFLHLTLIVL). The Extracellular segment spans residues 267-279 (CPQHPTCSCIFKN). A helical membrane pass occupies residues 280–300 (FNLFLALIICNAIIDPLIYAF). The Cytoplasmic portion of the chain corresponds to 301-317 (RSQELRRTLKKVLLCSW). Cys-315 carries S-palmitoyl cysteine lipidation.

It belongs to the G-protein coupled receptor 1 family. In terms of assembly, interacts with MGRN1, but does not undergo MGRN1-mediated ubiquitination; this interaction competes with GNAS-binding and thus inhibits agonist-induced cAMP production. Interacts with OPN3; the interaction results in a decrease in MC1R-mediated cAMP signaling and ultimately a decrease in melanin production in melanocytes.

The protein resides in the cell membrane. Its function is as follows. Receptor for MSH (alpha, beta and gamma) and ACTH. The activity of this receptor is mediated by G proteins which activate adenylate cyclase. Mediates melanogenesis, the production of eumelanin (black/brown) and phaeomelanin (red/yellow), via regulation of cAMP signaling in melanocytes. In Presbytis comata (Grizzled leaf monkey), this protein is Melanocyte-stimulating hormone receptor (MC1R).